The following is a 529-amino-acid chain: Bifunctional purine biosynthesis protein PurH (529 aa).

The 147-residue stretch at 3–149 (DRIPLKRALI…KNHAFVTVVV (147 aa)) folds into the MGS-like domain.

It belongs to the PurH family.

The enzyme catalyses (6R)-10-formyltetrahydrofolate + 5-amino-1-(5-phospho-beta-D-ribosyl)imidazole-4-carboxamide = 5-formamido-1-(5-phospho-D-ribosyl)imidazole-4-carboxamide + (6S)-5,6,7,8-tetrahydrofolate. It carries out the reaction IMP + H2O = 5-formamido-1-(5-phospho-D-ribosyl)imidazole-4-carboxamide. It functions in the pathway purine metabolism; IMP biosynthesis via de novo pathway; 5-formamido-1-(5-phospho-D-ribosyl)imidazole-4-carboxamide from 5-amino-1-(5-phospho-D-ribosyl)imidazole-4-carboxamide (10-formyl THF route): step 1/1. Its pathway is purine metabolism; IMP biosynthesis via de novo pathway; IMP from 5-formamido-1-(5-phospho-D-ribosyl)imidazole-4-carboxamide: step 1/1. This is Bifunctional purine biosynthesis protein PurH from Paracoccus denitrificans (strain Pd 1222).